The sequence spans 121 residues: Holo-[acyl-carrier-protein] synthase (121 aa).

Mg(2+) is bound by residues Asp-6 and Glu-55.

Belongs to the P-Pant transferase superfamily. AcpS family. The cofactor is Mg(2+).

The protein localises to the cytoplasm. The catalysed reaction is apo-[ACP] + CoA = holo-[ACP] + adenosine 3',5'-bisphosphate + H(+). Transfers the 4'-phosphopantetheine moiety from coenzyme A to a Ser of acyl-carrier-protein. The protein is Holo-[acyl-carrier-protein] synthase of Chloroherpeton thalassium (strain ATCC 35110 / GB-78).